A 91-amino-acid polypeptide reads, in one-letter code: Large ribosomal subunit protein uL23c (91 aa).

It belongs to the universal ribosomal protein uL23 family. Part of the 50S ribosomal subunit.

Its subcellular location is the plastid. The protein localises to the chloroplast. Its function is as follows. Binds to 23S rRNA. This chain is Large ribosomal subunit protein uL23c (rpl23), found in Picea abies (Norway spruce).